A 405-amino-acid chain; its full sequence is Probable tRNA sulfurtransferase (405 aa).

Residues 60-165 (EPVNDRLKVV…QDGAYISNQL (106 aa)) form the THUMP domain. ATP is bound by residues 183-184 (ML), 208-209 (HF), arginine 265, glycine 287, and glutamine 296.

The protein belongs to the ThiI family.

Its subcellular location is the cytoplasm. The enzyme catalyses [ThiI sulfur-carrier protein]-S-sulfanyl-L-cysteine + a uridine in tRNA + 2 reduced [2Fe-2S]-[ferredoxin] + ATP + H(+) = [ThiI sulfur-carrier protein]-L-cysteine + a 4-thiouridine in tRNA + 2 oxidized [2Fe-2S]-[ferredoxin] + AMP + diphosphate. The catalysed reaction is [ThiS sulfur-carrier protein]-C-terminal Gly-Gly-AMP + S-sulfanyl-L-cysteinyl-[cysteine desulfurase] + AH2 = [ThiS sulfur-carrier protein]-C-terminal-Gly-aminoethanethioate + L-cysteinyl-[cysteine desulfurase] + A + AMP + 2 H(+). It participates in cofactor biosynthesis; thiamine diphosphate biosynthesis. Its function is as follows. Catalyzes the ATP-dependent transfer of a sulfur to tRNA to produce 4-thiouridine in position 8 of tRNAs, which functions as a near-UV photosensor. Also catalyzes the transfer of sulfur to the sulfur carrier protein ThiS, forming ThiS-thiocarboxylate. This is a step in the synthesis of thiazole, in the thiamine biosynthesis pathway. The sulfur is donated as persulfide by IscS. The polypeptide is Probable tRNA sulfurtransferase (Lactobacillus delbrueckii subsp. bulgaricus (strain ATCC BAA-365 / Lb-18)).